A 223-amino-acid polypeptide reads, in one-letter code: MGPWEAKWIRHSDVRPFPQPEPMTVEEKVAVMLKPELHVSSGCHPYPAVNDLGETNGGLKTTGAPSGMCKGSGWGSQVYGRHASFRGVWAIMYVWYFPKDMPSAHFGHRHDWEHVIVWIEKPVVENVKILAVTPSFHDGYSKQVPPDPSHLNGLAAKFIYESEWPINHALRPTRKGGKKQDLILWEQMSSNARHALNIVPWGAANTPFNDFVFMGRLEKAFPF.

Positions 90-100 (AIMYVWYFPKD) match the Conserved undecapeptide motif motif. The Conserved heptapeptide motif signature appears at 107–113 (GHRHDWE).

It belongs to the Necrosis inducing protein (NPP1) family.

Its subcellular location is the secreted. It is found in the host cytoplasm. In terms of biological role, probable secreted effector that may act as a pathogen-associated molecular pattern (PAMP) recognized by the plant immune system. Seems not to induce necrosis, neither in several susceptible or resistant Vitis species nor in the dicot model plant Nicotiana benthamiana. This is NLP effector protein 3 from Plasmopara viticola (Downy mildew of grapevine).